The chain runs to 371 residues: Protein OSB2, chloroplastic (371 aa).

Residues 1–20 constitute a chloroplast transit peptide; the sequence is MSLISKSLARIECSPFFYPR. Positions 45-64 are disordered; that stretch reads GKTGNGERKQRAKAPAKTPE. The SSB domain maps to 97–195; the sequence is VANWVNLIGF…VLVQNLNFIQ (99 aa). PDF region regions lie at residues 237-289 and 312-360; these read WNHL…PKLE and WKDL…PKLP.

As to expression, expressed in the floral abscission zone.

Its subcellular location is the plastid. The protein localises to the chloroplast. In terms of biological role, binds preferentially single-stranded DNA. Does not bind to RNA. The chain is Protein OSB2, chloroplastic (OSB2) from Arabidopsis thaliana (Mouse-ear cress).